A 331-amino-acid polypeptide reads, in one-letter code: UDP-glucose 4-epimerase (331 aa).

Residues 11-12 (YI), 31-36 (DNLITG), 51-52 (DI), 73-77 (FAAFS), N92, T117, Y141, K145, and F169 contribute to the NAD(+) site. Substrate contacts are provided by T117 and Y141. The Proton acceptor role is filled by Y141. Residues N170, 189–190 (HI), 206–208 (QIY), R221, and 282–285 (RAGD) each bind substrate.

It belongs to the NAD(P)-dependent epimerase/dehydratase family. Homodimer. It depends on NAD(+) as a cofactor.

It catalyses the reaction UDP-alpha-D-glucose = UDP-alpha-D-galactose. It functions in the pathway carbohydrate metabolism; galactose metabolism. The polypeptide is UDP-glucose 4-epimerase (galE) (Lacticaseibacillus casei (Lactobacillus casei)).